Reading from the N-terminus, the 64-residue chain is Large ribosomal subunit protein bL28 (64 aa).

It belongs to the bacterial ribosomal protein bL28 family.

The polypeptide is Large ribosomal subunit protein bL28 (Persephonella marina (strain DSM 14350 / EX-H1)).